A 130-amino-acid polypeptide reads, in one-letter code: Bet1-like SNARE 1-2 (130 aa).

Residues 1–106 (MNFRRENRAS…EKKSNRKSCK (106 aa)) are Cytoplasmic-facing. Positions 33-95 (AHDERDNDEA…SGTINRFKLV (63 aa)) constitute a t-SNARE coiled-coil homology domain. Residues 40 to 82 (DEALENLQDRVSFLKRVTGDIHEEVENHNRLLDKVGNKMDSAR) are a coiled coil. The helical; Anchor for type IV membrane protein transmembrane segment at 107–122 (LIAYFVLLFLIMYYLI) threads the bilayer. Over 123–130 (RLLNYIKG) the chain is Vesicular.

The protein belongs to the BET1 family.

It is found in the golgi apparatus membrane. It localises to the endoplasmic reticulum membrane. In terms of biological role, required for vesicular transport from the ER to the Golgi complex. Functions as a SNARE associated with ER-derived vesicles. This chain is Bet1-like SNARE 1-2 (BET12), found in Arabidopsis thaliana (Mouse-ear cress).